Consider the following 81-residue polypeptide: ATP synthase subunit c, chloroplastic (81 aa).

The next 2 helical transmembrane spans lie at 7-27 and 57-77; these read AASV…PGIG and LAFM…LLFA.

It belongs to the ATPase C chain family. As to quaternary structure, F-type ATPases have 2 components, F(1) - the catalytic core - and F(0) - the membrane proton channel. F(1) has five subunits: alpha(3), beta(3), gamma(1), delta(1), epsilon(1). F(0) has four main subunits: a(1), b(1), b'(1) and c(10-14). The alpha and beta chains form an alternating ring which encloses part of the gamma chain. F(1) is attached to F(0) by a central stalk formed by the gamma and epsilon chains, while a peripheral stalk is formed by the delta, b and b' chains.

It is found in the plastid. The protein resides in the chloroplast thylakoid membrane. F(1)F(0) ATP synthase produces ATP from ADP in the presence of a proton or sodium gradient. F-type ATPases consist of two structural domains, F(1) containing the extramembraneous catalytic core and F(0) containing the membrane proton channel, linked together by a central stalk and a peripheral stalk. During catalysis, ATP synthesis in the catalytic domain of F(1) is coupled via a rotary mechanism of the central stalk subunits to proton translocation. In terms of biological role, key component of the F(0) channel; it plays a direct role in translocation across the membrane. A homomeric c-ring of between 10-14 subunits forms the central stalk rotor element with the F(1) delta and epsilon subunits. This is ATP synthase subunit c, chloroplastic from Staurastrum punctulatum (Green alga).